Consider the following 769-residue polypeptide: MAEDGMLLNFSLDDSVIKPQQRFKGGTWKDRLVAKKIAVKRQNKSRHSAETGAVNSNNPQNPNKINVPTGQRPAKRQRIDGGDFKPTTKSSAGGGGVGNDEQTDRKSYGDRQVISSLFTYNPTAKTVASTDGATHDEDTTEPAKPSNAPLVDGIDTFTSLGLSPSLATHLLTKLNLKTPTAIQKSSITQLLKEECDAFVQAQTGSGKTLAYLLPIVERLMRISSHNKGKKDSEGNTVHRDSGLFAIVLAPTRELCKQISVVLDGLLRCAHWIVAGTVIGGEKKKSEKARLRKGLNILVATPGRLADHLENTKVLDVSNVRWLVLDEGDRLMDLGFEEEIQGIIKKLDERRRPSKIPDLPAKRTTILCSATLKMNVQRLGEISLKEAIHIKADPADEDDEQKDGSKQPEFSAPAQLKQSYAVVAAKLRLVTLTALLKRTFARKGSVMKAIIFVSCADSVDFHFEVFTRRESSEELPDADDENAPSSSNVHGSIATASAFSNPSNNVILHKLHGSLPQHVRTATLSAFAKQKDASVLICTDVAARGLDLPNVDFVIEYDPAFCSDDHLHRIGRTARLGRDGRALIFLLPGNEEGYVDILKGSYREGSSNSVTRNEVNEILKRGFGGNSEAISKGWEDKATDWQLDIERWALEDSTILEMARRAYQSHIRAYATHIAAERHMFNIKDLHLGHLAKSFALRDRPAKINVPGLRPGNEDTKKSFKADRKLASGEKRKMSAREDSSSTTDAAEARKKMQQKLKEHMAGASEFNIA.

Disordered stretches follow at residues 38–107 and 127–150; these read AVKR…DRKS and VAST…NAPL. The segment covering 55-68 has biased composition (low complexity); that stretch reads NSNNPQNPNKINVP. The short motif at 155–184 is the Q motif element; that stretch reads DTFTSLGLSPSLATHLLTKLNLKTPTAIQK. In terms of domain architecture, Helicase ATP-binding spans 188 to 389; it reads TQLLKEECDA…EISLKEAIHI (202 aa). Position 201–208 (201–208) interacts with ATP; that stretch reads AQTGSGKT. Residues 325–328 carry the DEAD box motif; it reads DEGD. Disordered stretches follow at residues 391–411, 471–490, and 705–769; these read ADPA…EFSA, SEEL…NVHG, and VPGL…FNIA. Residues 430–622 enclose the Helicase C-terminal domain; the sequence is TLTALLKRTF…EVNEILKRGF (193 aa). Residues 472–481 show a composition bias toward acidic residues; that stretch reads EELPDADDEN. Basic and acidic residues-rich tracts occupy residues 711–739 and 746–760; these read GNED…REDS and AEAR…KEHM.

The protein belongs to the DEAD box helicase family. DDX31/DBP7 subfamily.

It is found in the nucleus. The protein resides in the nucleolus. The enzyme catalyses ATP + H2O = ADP + phosphate + H(+). In terms of biological role, ATP-binding RNA helicase involved in the biogenesis of 60S ribosomal subunits and is required for the normal formation of 25S and 5.8S rRNAs. In Coccidioides immitis (strain RS) (Valley fever fungus), this protein is ATP-dependent RNA helicase DBP7 (DBP7).